A 326-amino-acid chain; its full sequence is Probable cell division protein WhiA (326 aa).

Positions 275 to 308 (SLDELGHHADPPMTKDAVAGRIRRLLAMADKKAV) form a DNA-binding region, H-T-H motif.

It belongs to the WhiA family.

In terms of biological role, involved in cell division and chromosome segregation. The polypeptide is Probable cell division protein WhiA (Clavibacter michiganensis subsp. michiganensis (strain NCPPB 382)).